Consider the following 275-residue polypeptide: 2,3,4,5-tetrahydropyridine-2,6-dicarboxylate N-succinyltransferase (275 aa).

Residues Arg105 and Asp142 each contribute to the substrate site.

The protein belongs to the transferase hexapeptide repeat family. In terms of assembly, homotrimer.

It localises to the cytoplasm. The enzyme catalyses (S)-2,3,4,5-tetrahydrodipicolinate + succinyl-CoA + H2O = (S)-2-succinylamino-6-oxoheptanedioate + CoA. It participates in amino-acid biosynthesis; L-lysine biosynthesis via DAP pathway; LL-2,6-diaminopimelate from (S)-tetrahydrodipicolinate (succinylase route): step 1/3. This Histophilus somni (strain 129Pt) (Haemophilus somnus) protein is 2,3,4,5-tetrahydropyridine-2,6-dicarboxylate N-succinyltransferase.